The sequence spans 353 residues: Photosystem II protein D1 (353 aa).

Position 2 is an N-acetylthreonine (Thr2). Phosphothreonine is present on Thr2. The next 3 helical transmembrane spans lie at 29–46, 118–133, and 142–156; these read YIGW…TATS, HFLL…EWEL, and WIAV…AATA. His118 is a chlorophyll a binding site. Tyr126 serves as a coordination point for pheophytin a. The [CaMn4O5] cluster site is built by Asp170 and Glu189. The chain crosses the membrane as a helical span at residues 197–218; sequence FHMLGVAGVFGGSLFSAMHGSL. Residue His198 participates in chlorophyll a binding. A quinone contacts are provided by residues His215 and 264–265; that span reads SF. His215 provides a ligand contact to Fe cation. A Fe cation-binding site is contributed by His272. The chain crosses the membrane as a helical span at residues 274–288; the sequence is FLAAWPVVGIWFTAL. [CaMn4O5] cluster-binding residues include His332, Glu333, Asp342, and Ala344. Residues 345-353 constitute a propeptide that is removed on maturation; it reads AIEAPSTNG.

Belongs to the reaction center PufL/M/PsbA/D family. PSII is composed of 1 copy each of membrane proteins PsbA, PsbB, PsbC, PsbD, PsbE, PsbF, PsbH, PsbI, PsbJ, PsbK, PsbL, PsbM, PsbT, PsbX, PsbY, PsbZ, Psb30/Ycf12, at least 3 peripheral proteins of the oxygen-evolving complex and a large number of cofactors. It forms dimeric complexes. The D1/D2 heterodimer binds P680, chlorophylls that are the primary electron donor of PSII, and subsequent electron acceptors. It shares a non-heme iron and each subunit binds pheophytin, quinone, additional chlorophylls, carotenoids and lipids. D1 provides most of the ligands for the Mn4-Ca-O5 cluster of the oxygen-evolving complex (OEC). There is also a Cl(-1) ion associated with D1 and D2, which is required for oxygen evolution. The PSII complex binds additional chlorophylls, carotenoids and specific lipids. is required as a cofactor. In terms of processing, tyr-161 forms a radical intermediate that is referred to as redox-active TyrZ, YZ or Y-Z. C-terminally processed by CTPA; processing is essential to allow assembly of the oxygen-evolving complex and thus photosynthetic growth.

It localises to the plastid. It is found in the chloroplast thylakoid membrane. The enzyme catalyses 2 a plastoquinone + 4 hnu + 2 H2O = 2 a plastoquinol + O2. In terms of biological role, photosystem II (PSII) is a light-driven water:plastoquinone oxidoreductase that uses light energy to abstract electrons from H(2)O, generating O(2) and a proton gradient subsequently used for ATP formation. It consists of a core antenna complex that captures photons, and an electron transfer chain that converts photonic excitation into a charge separation. The D1/D2 (PsbA/PsbD) reaction center heterodimer binds P680, the primary electron donor of PSII as well as several subsequent electron acceptors. This Nicotiana debneyi (Debney's tobacco) protein is Photosystem II protein D1.